The chain runs to 82 residues: uncharacterized protein (82 aa).

Positions 1–20 are disordered; it reads MMNLSPPFKSPSGSSRAGRR.

This is an uncharacterized protein from Archaeoglobus fulgidus (strain ATCC 49558 / DSM 4304 / JCM 9628 / NBRC 100126 / VC-16).